The sequence spans 350 residues: DNA-directed RNA polymerase subunit alpha (350 aa).

Positions 1-226 (MLISQRPTLS…ELFGLARELN (226 aa)) are alpha N-terminal domain (alpha-NTD). The segment at 241–350 (ADHIASFALP…NQDYAETEQL (110 aa)) is alpha C-terminal domain (alpha-CTD). The tract at residues 326–350 (ATGTWNSDAGYDLEDNQDYAETEQL) is disordered. Residues 336 to 350 (YDLEDNQDYAETEQL) are compositionally biased toward acidic residues.

The protein belongs to the RNA polymerase alpha chain family. As to quaternary structure, homodimer. The RNAP catalytic core consists of 2 alpha, 1 beta, 1 beta' and 1 omega subunit. When a sigma factor is associated with the core the holoenzyme is formed, which can initiate transcription.

The catalysed reaction is RNA(n) + a ribonucleoside 5'-triphosphate = RNA(n+1) + diphosphate. In terms of biological role, DNA-dependent RNA polymerase catalyzes the transcription of DNA into RNA using the four ribonucleoside triphosphates as substrates. This chain is DNA-directed RNA polymerase subunit alpha, found in Mycobacterium sp. (strain JLS).